The sequence spans 612 residues: Chaperone protein DnaK (612 aa).

A Phosphothreonine; by autocatalysis modification is found at Thr-173. The disordered stretch occupies residues 576-612 (AAKQAQAQQDGGAGAKKADDNVVDAEYEEVNDDKDQK). A compositionally biased stretch (acidic residues) spans 596 to 612 (NVVDAEYEEVNDDKDQK).

The protein belongs to the heat shock protein 70 family.

Its function is as follows. Acts as a chaperone. This Bacillus licheniformis (strain ATCC 14580 / DSM 13 / JCM 2505 / CCUG 7422 / NBRC 12200 / NCIMB 9375 / NCTC 10341 / NRRL NRS-1264 / Gibson 46) protein is Chaperone protein DnaK.